Consider the following 372-residue polypeptide: PqqA peptide cyclase (372 aa).

In terms of domain architecture, Radical SAM core spans 4–220 (APPPLSVLLE…ETARRQLGDR (217 aa)). Residues C18, C22, and C25 each coordinate [4Fe-4S] cluster. The tract at residues 342–372 (ATAEQESASPAPAFIYRRPERPAAATADPLE) is disordered.

It belongs to the radical SAM superfamily. PqqE family. Interacts with PqqD. The interaction is necessary for activity of PqqE. [4Fe-4S] cluster is required as a cofactor.

It catalyses the reaction [PQQ precursor protein] + S-adenosyl-L-methionine = E-Y cross-linked-[PQQ precursor protein] + 5'-deoxyadenosine + L-methionine + H(+). The protein operates within cofactor biosynthesis; pyrroloquinoline quinone biosynthesis. Functionally, catalyzes the cross-linking of a glutamate residue and a tyrosine residue in the PqqA protein as part of the biosynthesis of pyrroloquinoline quinone (PQQ). This is PqqA peptide cyclase from Xanthomonas euvesicatoria pv. vesicatoria (strain 85-10) (Xanthomonas campestris pv. vesicatoria).